The primary structure comprises 386 residues: Glycerate dehydrogenase HPR, peroxisomal (386 aa).

NAD(+) contacts are provided by residues 175–176 (RI), 271–273 (CSR), and D297. R273 is a catalytic residue. Residue E302 is part of the active site. H320 functions as the Proton donor in the catalytic mechanism. NAD(+) is bound at residue 320–323 (HIAS). The Microbody targeting signal signature appears at 384-386 (SKL).

This sequence belongs to the D-isomer specific 2-hydroxyacid dehydrogenase family. In terms of tissue distribution, present in leaves (at protein level). Mostly expressed in photosynthetic tissues such as leaves, stems, flowers, buds, and, to a lower extent, in siliques and roots.

The protein resides in the peroxisome. The catalysed reaction is (R)-glycerate + NAD(+) = 3-hydroxypyruvate + NADH + H(+). It participates in photosynthesis; photorespiration; 3-phospho-D-glycerate from glycine: step 3/4. Its activity is regulated as follows. Slightly inhibited by oxalate. Its function is as follows. Catalyzes the NADH-dependent reduction of hydroxypyruvate into glycerate in the photorespiratory core cycle. Mediates fatty acid beta-oxidation in germinating seeds when malate dehydrogenase is absent. In Arabidopsis thaliana (Mouse-ear cress), this protein is Glycerate dehydrogenase HPR, peroxisomal (HPR).